We begin with the raw amino-acid sequence, 199 residues long: Probable GTP-binding protein EngB (199 aa).

One can recognise an EngB-type G domain in the interval 22-195; that stretch reads QLPEIALSGR…WEWIEQQCDI (174 aa). Residues 30–37, 57–61, 75–78, 142–145, and 174–176 each bind GTP; these read GRSNVGKS, GKTQT, DVPG, TKMD, and FSA. The Mg(2+) site is built by Ser37 and Thr59.

The protein belongs to the TRAFAC class TrmE-Era-EngA-EngB-Septin-like GTPase superfamily. EngB GTPase family. Mg(2+) serves as cofactor.

Necessary for normal cell division and for the maintenance of normal septation. The chain is Probable GTP-binding protein EngB from Latilactobacillus sakei subsp. sakei (strain 23K) (Lactobacillus sakei subsp. sakei).